The chain runs to 317 residues: Actin-related protein 2/3 complex subunit 2 (317 aa).

It belongs to the ARPC2 family. As to quaternary structure, component of the Arp2/3 complex composed of arp2, act2, arc1/p41-ARC, arc2/p34-ARC, arc3/p21-ARC, arc4/p20-ARC and arc5/p16-ARC.

It localises to the cytoplasm. It is found in the cytoskeleton. The protein resides in the actin patch. Functionally, functions as actin-binding component of the Arp2/3 complex which is involved in regulation of actin polymerization and together with an activating nucleation-promoting factor (NPF) mediates the formation of branched actin networks. Seems to contact the mother actin filament. The chain is Actin-related protein 2/3 complex subunit 2 (arc2) from Schizosaccharomyces pombe (strain 972 / ATCC 24843) (Fission yeast).